The primary structure comprises 172 residues: Lectin (172 aa).

An N-terminal signal peptide occupies residues Met1–Gly20. One can recognise a C-type lectin domain in the interval Asp36–Tyr172. 2 disulfides stabilise this stretch: Cys65–Cys164 and Cys140–Cys156. Asn93 carries an N-linked (GlcNAc...) asparagine glycan.

As to quaternary structure, heterodimer. As to expression, anterior part of oviduct.

It is found in the secreted. May be involved in protection of eggs and embryos against microorganisms. Calcium-dependent lectin with specificity to D-glucose and D-glucosamine. Can agglutinate microorganisms in vivo. The protein is Lectin (LEC) of Pleurodeles waltl (Iberian ribbed newt).